Consider the following 436-residue polypeptide: Cytochrome P450 monooxygenase phqO (436 aa).

Residue Cys377 coordinates heme.

The protein belongs to the cytochrome P450 family. Heme is required as a cofactor.

It participates in alkaloid biosynthesis. In terms of biological role, cytochrome P450 monooxygenase; part of the gene cluster that mediates the biosynthesis of paraherquamide, a fungal indole alkaloid that belongs to a family of natural products containing a characteristic bicyclo[2.2.2]diazaoctane core. The first steps in the biosynthesis of paraherquamide is the production of the beta-methyl-proline precursor from L-isoleucine. They require oxidation of a terminally hydroxylated L-isoleucine to the corresponding aldehyde by enzymes which have still to be identified. Spontaneous cyclization and dehydration would yield the 4-methyl pyrolline-5-carboxylic acid, which is then reduced by the pyrroline-5-carboxylate reductase phqD leading to the beta-methyl-proline precursor. The next step of paraherquamide biosynthesis involves coupling of beta-methyl-proline and L-tryptophan by the bimodular NRPS phqB, to produce a monooxopiperazine intermediate. The reductase (R) domain of phqB utilizes NADPH for hydride transfer to reduce the thioester bond of the T domain-tethered linear dipeptide to a hemithioaminal intermediate, which spontaneously cleaves the C-S bond to release the aldehyde product. This compound undergoes spontaneous cyclization and dehydration to give a dienamine which is reverse prenylated at C-2 by the reverse prenyltransferase phqJ. The other prenyltransferase present in the cluster, phqI may be a redundant gene in the pathway. During biosynthetic assembly, the key step to produce the polycyclic core is catalyzed by the bifunctional reductase and intramolecular [4+2] Diels-Alderase, phqE, resulting in formation of the [2.2.2] diazaoctane intermediate preparaherquamide. Following formation of preparaherquamide, an indole 2,3-epoxidation-initiated pinacol-like rearrangement is catalyzed by the phqK FAD-dependent monooxygenase. The prenyltransferase phqA, the cytochrome P450 monooxygenase phqL, and the FAD-linked oxidoreductase phqH (or the cytochrome P450 monooxygenase phqM), are proposed to be involved in the formation of the pyran ring. The FAD-dependent monooxygenase phqK is likely responsible for generation of the spiro-oxindole, and the N-methylation is likely mediated by the phqN methyltransferase leading to the isolable natural product paraherquamide F. However, the order of these biosynthetic steps has still to be determined. In late-stage paraherquamide biosynthesis, the third P450 monooxygenase, phqO, is probably responsible for the C-14 hydroxylation, transforming paraherquamide F to paraherquamide G, and paraherquamide E to the final product paraherquamide A. The expansion from the 6-membered ring pyran (in paraherquamides F and G) to the 7-membered dioxepin ring (in paraherquamides A and E) represents a poorly understood but intriguing process that probably involves the 2-oxoglutarate-dependent dioxygenase phqC. Finally, the remaining members of the paraherquamide cluster, including phqI as well as phqM (or phqH), do not have a clearly prescribed role and appear to be redundant. The sequence is that of Cytochrome P450 monooxygenase phqO from Penicillium fellutanum.